The following is a 453-amino-acid chain: Argininosuccinate lyase (453 aa).

It belongs to the lyase 1 family. Argininosuccinate lyase subfamily.

It is found in the cytoplasm. It carries out the reaction 2-(N(omega)-L-arginino)succinate = fumarate + L-arginine. It participates in amino-acid biosynthesis; L-arginine biosynthesis; L-arginine from L-ornithine and carbamoyl phosphate: step 3/3. In Shewanella loihica (strain ATCC BAA-1088 / PV-4), this protein is Argininosuccinate lyase.